We begin with the raw amino-acid sequence, 1882 residues long: RNA2 polyprotein (1882 aa).

2 repeat units span residues 554-606 (SWSS…LPSF) and 607-659 (SWSS…LPSF). Residues 554 to 698 (SWSSPLPLFA…VSDEFMDVLP (145 aa)) form a 2.5 X tandem repeats, Pro-rich region. A 3; truncated and approximate repeat occupies 660-698 (SWSSPLPLFASFKVNRGACFLQVLPARKVVSDEFMDVLP). Polar residues-rich tracts occupy residues 1289-1303 (SSLF…QQGT) and 1838-1847 (PSATLGTNNP). Disordered regions lie at residues 1289–1320 (SSLF…SSVQ) and 1838–1863 (PSAT…PGGQ).

This sequence belongs to the nepoviruses RNA2 polyprotein family. Post-translationally, specific enzymatic cleavages in vivo by the P1 encoded 3C-like protease yield mature proteins.

It is found in the host cell junction. It localises to the host plasmodesma. The protein localises to the virion. Its function is as follows. Protein 2A: implicated in RNA2 replication. Could also be required for nematode transmission of the virus. Functionally, transports viral genome to neighboring plant cells directly through plasmosdesmata, without any budding. The movement protein allows efficient cell to cell propagation, by bypassing the host cell wall barrier. Acts by forming a tubular structure at the host plasmodesmata, enlarging it enough to allow free passage of virion capsids. The protein is RNA2 polyprotein of Tomato ringspot virus (isolate raspberry) (ToRSV).